We begin with the raw amino-acid sequence, 1951 residues long: [F-actin]-monooxygenase MICAL2 (1951 aa).

A monooxygenase domain region spans residues 2-494; the sequence is GENEDEKQAQ…KHLYITKEMD (493 aa). FAD-binding positions include C97, 116–118, 123–125, F183, Y298, and D398; these read EKR and RNN. The 104-residue stretch at 516–619 folds into the Calponin-homology (CH) domain; that stretch reads DIRPNKLLTW…MVMYLSKFYE (104 aa). Residue S631 is modified to Phosphoserine. The Nuclear localization signal motif lies at 660-681; that stretch reads RKRTPRVDTQTEENDMNKRRRQ. 2 disordered regions span residues 663–712 and 891–921; these read TPRV…SQNK and KRVPHAHPPSPPSCLPSPHPAAASSPPAADS. Low complexity predominate over residues 691–700; that stretch reads SFSSRSLGSS. Residues 896–909 are compositionally biased toward pro residues; that stretch reads AHPPSPPSCLPSPH. The segment covering 910 to 921 has biased composition (low complexity); the sequence is PAAASSPPAADS. The 63-residue stretch at 991-1053 folds into the LIM zinc-binding domain; that stretch reads DTCYFCKKRV…KPHFVHCKTS (63 aa). Residues C993, C996, H1014, C1017, C1020, C1023, C1043, and H1046 each contribute to the Zn(2+) site. At T1052 the chain carries Phosphoserine. Disordered stretches follow at residues 1054-1141, 1158-1314, 1348-1368, 1383-1427, 1451-1476, 1489-1580, 1594-1624, 1678-1697, 1706-1731, and 1747-1766; these read SKQR…RISP, TSED…VSPT, VEPGRESLRSPEEISSSEGCQ, ILGK…RKLG, HKTGEQLSQESAENIRGGSLKPTCSS, QKKA…AKKA, AQASDLSLPNSILRSRSLPSRPSKMFFSTTP, GDFFNSPKEEGPPGNRVPSL, STSMGQVAHPSSTGQDARKLEGGEGG, and PVTEATSSPTSSSAEEEADS. A compositionally biased stretch (basic and acidic residues) spans 1061–1070; it reads AELNQQREEE. 3 stretches are compositionally biased toward polar residues: residues 1129 to 1138, 1228 to 1239, and 1246 to 1256; these read PRPSEWTSVR, HSLQSPTPSKYQ, and QSNSTPMNQRA. Pro residues predominate over residues 1257–1268; the sequence is PSPPKEPPPPPS. Over residues 1269 to 1285 the composition is skewed to low complexity; sequence LSSSSSLPSSFSSASVP. A compositionally biased stretch (polar residues) spans 1291–1306; the sequence is DSSSPQVTYNLHSPQI. Residues 1314–1353 are interaction with MAPK1; that stretch reads TPIYLRRARAQGIVKEIPLYLPHSPMLESTEDCLVEPGRE. A compositionally biased stretch (basic and acidic residues) spans 1350–1359; that stretch reads PGRESLRSPE. Over residues 1532 to 1545 the composition is skewed to basic and acidic residues; sequence EAGKKTSPKPESKT. Residues 1599–1616 show a composition bias toward low complexity; sequence LSLPNSILRSRSLPSRPS. Basic and acidic residues predominate over residues 1678 to 1688; it reads GDFFNSPKEEG. Phosphoserine is present on S1683. Residues 1706 to 1720 are compositionally biased toward polar residues; the sequence is STSMGQVAHPSSTGQ. Over residues 1749 to 1759 the composition is skewed to low complexity; it reads TEATSSPTSSS. Residues 1789 to 1939 enclose the bMERB domain; the sequence is KQEELKRLHK…ERTQDQHFEN (151 aa).

It belongs to the Mical family. As to quaternary structure, interacts with PLXNA4. Interacts with RAB1B. Interacts with MAPK1/ERK2. Interacts with RAB1B, RAB35, RAB8A, RAB10, RAB13 and RAB15 (in their GTP-bound forms); binding to RAB1B and RAB35 is of low affinity compared to other Rab proteins; binding to RAB1B and RAB35 is of low affinity compared to other Rab proteins; at least in case of RAB8A may bind 2 molecules of RAB8A simultaneously through a high and a low affinity binding site, respectively. It depends on FAD as a cofactor. In terms of tissue distribution, expressed only in testis (at protein level).

Its subcellular location is the cytoplasm. It localises to the nucleus. It catalyses the reaction L-methionyl-[F-actin] + NADPH + O2 + H(+) = L-methionyl-(R)-S-oxide-[F-actin] + NADP(+) + H2O. In terms of biological role, methionine monooxygenase that promotes depolymerization of F-actin by mediating oxidation of residues 'Met-44' and 'Met-47' on actin to form methionine-sulfoxide, resulting in actin filament disassembly and preventing repolymerization. Regulates the disassembly of branched actin networks also by oxidizing ARP3B-containing ARP2/3 complexes leading to ARP3B dissociation from the network. Acts as a key regulator of the SRF signaling pathway elicited by nerve growth factor and serum: mediates oxidation and subsequent depolymerization of nuclear actin, leading to increase MKL1/MRTF-A presence in the nucleus and promote SRF:MKL1/MRTF-A-dependent gene transcription. Does not activate SRF:MKL1/MRTF-A through RhoA. This chain is [F-actin]-monooxygenase MICAL2, found in Mus musculus (Mouse).